A 362-amino-acid polypeptide reads, in one-letter code: MRVDLFDFDLPEALIALRPVEPRDAARLLRVAPGHPLAEARVRDLPALLRPGDCLVFNDTRVIPARLRGLRARPDGSSVRVEAMLHRREGPDCWRAFARPGKRLREGDRIRFGSGRDGSACDLGHLDATVAARGEEGEITLAFDLAGAFLDEAVARLGELPLPPYIAGRRPADARDAADYQTVYAREPGAVAAPTAGLHFTPDLLARLGAAGIGEARLTLHVGAGTFLPVKAQDTEAHRMHAETGEITPGTAARLNRARAEGGRIVAVGTTSLRLLESAAEPDGTIRPFAGATDIFITPGYRFRAVDVLMTNFHLPRSTLFMLVSAFAGLETMRAAYAHAVAQGYRFYSYGDASLLFRAEGR.

It belongs to the QueA family. As to quaternary structure, monomer.

It is found in the cytoplasm. It catalyses the reaction 7-aminomethyl-7-carbaguanosine(34) in tRNA + S-adenosyl-L-methionine = epoxyqueuosine(34) in tRNA + adenine + L-methionine + 2 H(+). The protein operates within tRNA modification; tRNA-queuosine biosynthesis. Its function is as follows. Transfers and isomerizes the ribose moiety from AdoMet to the 7-aminomethyl group of 7-deazaguanine (preQ1-tRNA) to give epoxyqueuosine (oQ-tRNA). This Methylobacterium sp. (strain 4-46) protein is S-adenosylmethionine:tRNA ribosyltransferase-isomerase.